A 541-amino-acid chain; its full sequence is Chaperonin GroEL 2 (541 aa).

ATP contacts are provided by residues 29-32 (TLGP) and 86-90 (DGTTT). Residue Lys132 forms an Isoglutamyl lysine isopeptide (Lys-Gln) (interchain with Q-Cter in protein Pup) linkage. ATP contacts are provided by residues Gly413, 476 to 478 (NAA), and Asp492.

It belongs to the chaperonin (HSP60) family. Forms a cylinder of 14 subunits composed of two heptameric rings stacked back-to-back. Interacts with the co-chaperonin GroES.

The protein localises to the secreted. It is found in the capsule. It localises to the cell surface. Its subcellular location is the cell wall. The catalysed reaction is ATP + H2O + a folded polypeptide = ADP + phosphate + an unfolded polypeptide.. Functionally, together with its co-chaperonin GroES, plays an essential role in assisting protein folding. The GroEL-GroES system forms a nano-cage that allows encapsulation of the non-native substrate proteins and provides a physical environment optimized to promote and accelerate protein folding. This is Chaperonin GroEL 2 from Mycolicibacterium smegmatis (strain ATCC 700084 / mc(2)155) (Mycobacterium smegmatis).